A 126-amino-acid polypeptide reads, in one-letter code: Methylglyoxal synthase (126 aa).

Positions 1 to 126 (MADRKCLALI…AEQLIDFRRN (126 aa)) constitute an MGS-like domain. Substrate contacts are provided by residues His-12, Lys-16, 38–41 (TGTT), and 59–60 (SG). The active-site Proton donor/acceptor is the Asp-65. His-92 contributes to the substrate binding site.

It belongs to the methylglyoxal synthase family.

It carries out the reaction dihydroxyacetone phosphate = methylglyoxal + phosphate. Its function is as follows. Catalyzes the formation of methylglyoxal from dihydroxyacetone phosphate. This is Methylglyoxal synthase from Rhizobium meliloti (strain 1021) (Ensifer meliloti).